A 114-amino-acid polypeptide reads, in one-letter code: Aspartate 1-decarboxylase (114 aa).

Ser25 (schiff-base intermediate with substrate; via pyruvic acid) is an active-site residue. A Pyruvic acid (Ser) modification is found at Ser25. Residue Thr57 coordinates substrate. Tyr58 serves as the catalytic Proton donor. A substrate-binding site is contributed by 73–75 (GAA).

The protein belongs to the PanD family. Heterooctamer of four alpha and four beta subunits. Pyruvate is required as a cofactor. In terms of processing, is synthesized initially as an inactive proenzyme, which is activated by self-cleavage at a specific serine bond to produce a beta-subunit with a hydroxyl group at its C-terminus and an alpha-subunit with a pyruvoyl group at its N-terminus.

Its subcellular location is the cytoplasm. The catalysed reaction is L-aspartate + H(+) = beta-alanine + CO2. It functions in the pathway cofactor biosynthesis; (R)-pantothenate biosynthesis; beta-alanine from L-aspartate: step 1/1. In terms of biological role, catalyzes the pyruvoyl-dependent decarboxylation of aspartate to produce beta-alanine. This Thermotoga petrophila (strain ATCC BAA-488 / DSM 13995 / JCM 10881 / RKU-1) protein is Aspartate 1-decarboxylase.